A 115-amino-acid chain; its full sequence is Viral Lymphotactin (115 aa).

Residues 1–19 form the signal peptide; that stretch reads MRLLTILALCCVAIWVVES. C30 and C67 are joined by a disulfide.

The protein belongs to the intercrine gamma family. As to quaternary structure, interacts with host XCR1. In terms of processing, N-glycosylated and O-glycosylated.

It is found in the secreted. Chemoattractant for CD4-dendritic cells, but not for CD4+ dendritic cells, T-cells or B-cells. This is Viral Lymphotactin (vXCL1) from Rat cytomegalovirus (isolate England) (RCMV-E).